The following is a 175-amino-acid chain: Zinc finger protein ZAT18 (175 aa).

C2H2-type zinc fingers lie at residues 49–71 and 93–115; these read FECKTCNRKFDSFQALGGHRASH and HKCTICDQMFGTGQALGGHMRKH. Residues 71-78 carry the Nuclear localization signal motif; sequence HKKPKLIV. Residues 146 to 152 carry the EAR-like (transcriptional repression) motif; sequence LDLNLTP.

In terms of tissue distribution, mostly expressed in stems, siliques and leaves, and, to a lower extent, in cotyledons, hypocotyls and roots.

It localises to the nucleus. Functionally, transcription factor involved in stress responses. Positive regulator of the jasmonic acid (JA)- mediated signaling pathway. Triggers the up-regulation of LOX3, VSP2, PAL1 and PAL2 in a JA-dependent manner. Promotes drought and osmotic stress tolerance by preventing reactive oxygen species (ROS) production (e.g. H(2)O(2)). This Arabidopsis thaliana (Mouse-ear cress) protein is Zinc finger protein ZAT18.